The following is a 318-amino-acid chain: L-lactate dehydrogenase (318 aa).

3 residues coordinate NAD(+): V15, D36, and K41. Substrate is bound at residue R89. NAD(+) contacts are provided by residues S102, 119-121, and T144; that span reads ITN. Position 121–124 (121–124) interacts with substrate; it reads NPVD. 149 to 152 is a substrate binding site; it reads DSAR. The active-site Proton acceptor is the H176. Substrate is bound at residue T231.

It belongs to the LDH/MDH superfamily. LDH family. Homotetramer.

Its subcellular location is the cytoplasm. The catalysed reaction is (S)-lactate + NAD(+) = pyruvate + NADH + H(+). The protein operates within fermentation; pyruvate fermentation to lactate; (S)-lactate from pyruvate: step 1/1. Catalyzes the conversion of lactate to pyruvate. The sequence is that of L-lactate dehydrogenase from Fusobacterium nucleatum subsp. nucleatum (strain ATCC 25586 / DSM 15643 / BCRC 10681 / CIP 101130 / JCM 8532 / KCTC 2640 / LMG 13131 / VPI 4355).